Here is a 353-residue protein sequence, read N- to C-terminus: Serine proteinase inhibitor 1 (353 aa).

Belongs to the serpin family. Poxviruses subfamily.

The protein resides in the host cytoplasm. Functionally, plays a role in mediating viral host range. May act to inhibit a caspase independent form of apoptosis to allow efficient virus replication in infected cells. The sequence is that of Serine proteinase inhibitor 1 (OPG208) from Vaccinia virus (strain Western Reserve) (VACV).